We begin with the raw amino-acid sequence, 332 residues long: Aspartate carbamoyltransferase catalytic subunit (332 aa).

The segment at 1 to 20 is disordered; sequence MPNTHDTKNNVSPSEYAKFD. Arg-72 and Thr-73 together coordinate carbamoyl phosphate. Lys-100 contributes to the L-aspartate binding site. The carbamoyl phosphate site is built by Arg-122, His-152, and Gln-155. Arg-186 and Arg-241 together coordinate L-aspartate. Residues Gly-282 and Pro-283 each contribute to the carbamoyl phosphate site.

This sequence belongs to the aspartate/ornithine carbamoyltransferase superfamily. ATCase family. As to quaternary structure, heterododecamer (2C3:3R2) of six catalytic PyrB chains organized as two trimers (C3), and six regulatory PyrI chains organized as three dimers (R2).

The catalysed reaction is carbamoyl phosphate + L-aspartate = N-carbamoyl-L-aspartate + phosphate + H(+). It participates in pyrimidine metabolism; UMP biosynthesis via de novo pathway; (S)-dihydroorotate from bicarbonate: step 2/3. Functionally, catalyzes the condensation of carbamoyl phosphate and aspartate to form carbamoyl aspartate and inorganic phosphate, the committed step in the de novo pyrimidine nucleotide biosynthesis pathway. The sequence is that of Aspartate carbamoyltransferase catalytic subunit from Psychrobacter sp. (strain TAD1).